We begin with the raw amino-acid sequence, 702 residues long: SAGA complex subunit NGG1 (702 aa).

Residues 1 to 10 (MPRHGRRGKL) are compositionally biased toward basic residues. Disordered regions lie at residues 1-29 (MPRH…PSKL) and 90-224 (LRKI…VKNP). Composition is skewed to basic and acidic residues over residues 11–22 (PKGEKLPKKEGG) and 90–108 (LRKI…EKQE). Polar residues predominate over residues 109-125 (TSNADGQHESSTATEET). A Phosphoserine modification is found at Ser-134. The segment covering 162-219 (MAKEEINEDKDLQVHRDQPREKRPFDSETENRATENENTQRPDNKKQKIDVDKMENDP) has biased composition (basic and acidic residues). A Phosphoserine modification is found at Ser-407. Thr-464 bears the Phosphothreonine mark. Residues 606–618 (KRIRVPKKRKKHH) carry the Nuclear localization signal motif. Disordered stretches follow at residues 611-636 (PKKR…IAQQ) and 672-702 (NESV…VELN). The segment covering 620-636 (AASNNVNTGTTSQIAQQ) has biased composition (polar residues). A compositionally biased stretch (acidic residues) spans 680 to 689 (DQEEDEDEAD).

Belongs to the NGG1 family. Component of the 1.8 MDa SAGA (Spt-Ada-Gcn5 acetyltransferase) complex, which is composed of 19 subunits TRA1, SPT7, TAF5, NGG1/ADA3, SGF73, SPT20/ADA5, SPT8, TAF12, TAF6, HFI1/ADA1, UBP8, GCN5, ADA2, SPT3, SGF29, TAF10, TAF9, SGF11 and SUS1. The SAGA complex is composed of 4 modules, namely the HAT (histone acetyltransferase) module (GCN5, ADA2, NGG1/ADA3 and SGF29), the DUB (deubiquitinating) module (UBP8, SGF11, SGF73 and SUS1), the core or TAF (TBP-associated factor) module (TAF5, TAF6, TAF9, TAF10 and TAF12), and the Tra1 or SPT (Suppressor of Ty) module (TRA1, HFI1/ADA1, SPT3, SPT7, SPT8 and SPT20/ADA5). The Tra1/SPT module binds activators, the core module recruits TBP (TATA-binding protein), the HAT module contains the histone H3 acetyltransferase GCN5, and the DUB module comprises the histone H2B deubiquitinase UBP8. Also identified in an altered form of SAGA, named SALSA (SAGA altered, Spt8 absent) or SLIK (SAGA-like) complex, which contains a C-terminal truncated form of SPT7 and is missing SPT8. However, it has been shown that the SAGA and SAGA-like SALSA/SLIK transcriptional coactivators are structurally and biochemically equivalent. Component of the 0.8 MDa ADA complex, a HAT complex distinct from SAGA, which at least consists of ADA2, NGG1/ADA3, AHC1, AHC2, SGF29 and GCN5. Identified in an Ada.spt complex with SPT7 and TRA1. Component of an ADA/GCN5 complex that consists of HFI1/ADA1, ADA2, NGG1/ADA3, SPT20/ADA5 and GCN5 and probably is a subcomplex of SAGA.

It localises to the nucleus. In terms of biological role, component of the transcription coactivator SAGA complex. SAGA acts as a general cofactor required for essentially all RNA polymerase II transcription. At the promoters, SAGA is required for transcription pre-initiation complex (PIC) recruitment. It influences RNA polymerase II transcriptional activity through different activities such as TBP interaction (via core/TAF module) and promoter selectivity, interaction with transcription activators (via Tra1/SPT module), and chromatin modification through histone acetylation (via HAT module) and deubiquitination (via DUB module). SAGA preferentially acetylates histones H3 (to form H3K9ac, H3K14ac, H3K18ac and H3K23ac) and H2B and deubiquitinates histone H2B. SAGA interacts with DNA via upstream activating sequences (UASs). Also identified in a modified version of SAGA named SALSA or SLIK. The cleavage of SPT7 and the absence of the SPT8 subunit in SLIK neither drive any major conformational differences in its structure compared with SAGA, nor significantly affect HAT, DUB, or DNA-binding activities. Component of the ADA histone acetyltransferase complex, which preferentially acetylates nucleosomal histones H3 (to form H3K14ac and H3K18ac) and H2B. May be involved in response to DNA damage by genotoxic agents. This chain is SAGA complex subunit NGG1 (NGG1), found in Saccharomyces cerevisiae (strain ATCC 204508 / S288c) (Baker's yeast).